The sequence spans 878 residues: Outer membrane usher protein FimD (878 aa).

The signal sequence occupies residues 1–45 (MSYLNLRLYQRNTQCLHIRKHRLAGFFVRLVVACAFAAQAPLSSA). Cys-855 and Cys-877 are oxidised to a cystine.

Belongs to the fimbrial export usher family.

The protein resides in the cell outer membrane. In terms of biological role, involved in the export and assembly of FimA fimbrial subunits across the outer membrane. This chain is Outer membrane usher protein FimD (fimD), found in Escherichia coli (strain K12).